The primary structure comprises 515 residues: Glucose-6-phosphate 1-dehydrogenase (515 aa).

Ala-2 is subject to N-acetylalanine. Ser-8 bears the Phosphoserine mark. A Phosphothreonine modification is found at Thr-10. Phe-26 is subject to Phosphoserine. Residues 38–45 (GASGDLAK) and Arg-72 each bind NADP(+). The residue at position 89 (Lys-89) is an N6-acetyllysine. Positions 147 and 171 each coordinate NADP(+). D-glucose 6-phosphate-binding positions include Lys-171, 201–205 (HYLGK), Glu-239, and Asp-258. Lys-171 bears the N6-(2-hydroxyisobutyryl)lysine; alternate mark. Lys-171 carries the post-translational modification N6-acetyllysine; alternate. His-263 serves as the catalytic Proton acceptor. Arg-357 is an NADP(+) binding site. D-glucose 6-phosphate-binding residues include Lys-360 and Arg-365. NADP(+) contacts are provided by Lys-366, Arg-370, and Arg-393. Gln-395 serves as a coordination point for D-glucose 6-phosphate. NADP(+) is bound by residues 401 to 403 (YTK) and 421 to 423 (DLT). Lys-403 is subject to N6-acetyllysine. At Lys-432 the chain carries N6-acetyllysine. Residue Arg-487 participates in NADP(+) binding. Lys-497 is modified (N6-acetyllysine). Residues Tyr-503 and Trp-509 each contribute to the NADP(+) site. At Tyr-503 the chain carries Phosphotyrosine.

It belongs to the glucose-6-phosphate dehydrogenase family. Homotetramer; dimer of dimers. Interacts with SIRT2; the interaction is enhanced by H(2)O(2) treatment. Forms a ternary complex with ALDOB and TP53; this interaction is direct. ALDOB stabilizes the complex inhibiting G6PD activity and keeping oxidative pentose phosphate metabolism in check. Acetylated by ELP3 at Lys-403; acetylation inhibits its homodimerization and enzyme activity. Deacetylated by SIRT2 at Lys-403; deacetylation stimulates its enzyme activity. In terms of tissue distribution, isoform Long is found in lymphoblasts, granulocytes and sperm.

The protein resides in the cytoplasm. The protein localises to the cytosol. It localises to the membrane. The catalysed reaction is D-glucose 6-phosphate + NADP(+) = 6-phospho-D-glucono-1,5-lactone + NADPH + H(+). The protein operates within carbohydrate degradation; pentose phosphate pathway; D-ribulose 5-phosphate from D-glucose 6-phosphate (oxidative stage): step 1/3. Catalyzes the rate-limiting step of the oxidative pentose-phosphate pathway, which represents a route for the dissimilation of carbohydrates besides glycolysis. The main function of this enzyme is to provide reducing power (NADPH) and pentose phosphates for fatty acid and nucleic acid synthesis. The sequence is that of Glucose-6-phosphate 1-dehydrogenase (G6PD) from Homo sapiens (Human).